We begin with the raw amino-acid sequence, 161 residues long: Phosphopantetheine adenylyltransferase (161 aa).

Residue Ser-9 coordinates substrate. ATP is bound by residues 9-10 (SF) and His-17. Lys-41, Thr-73, and Arg-87 together coordinate substrate. ATP contacts are provided by residues 88–90 (GIR), Glu-98, and 123–129 (YQYVSSS).

This sequence belongs to the bacterial CoaD family. Homohexamer. It depends on Mg(2+) as a cofactor.

It is found in the cytoplasm. It catalyses the reaction (R)-4'-phosphopantetheine + ATP + H(+) = 3'-dephospho-CoA + diphosphate. It participates in cofactor biosynthesis; coenzyme A biosynthesis; CoA from (R)-pantothenate: step 4/5. Functionally, reversibly transfers an adenylyl group from ATP to 4'-phosphopantetheine, yielding dephospho-CoA (dPCoA) and pyrophosphate. This is Phosphopantetheine adenylyltransferase from Levilactobacillus brevis (strain ATCC 367 / BCRC 12310 / CIP 105137 / JCM 1170 / LMG 11437 / NCIMB 947 / NCTC 947) (Lactobacillus brevis).